Here is a 238-residue protein sequence, read N- to C-terminus: UPF0173 metal-dependent hydrolase Helmi_16730 (238 aa).

The protein belongs to the UPF0173 family.

The polypeptide is UPF0173 metal-dependent hydrolase Helmi_16730 (Heliobacterium modesticaldum (strain ATCC 51547 / Ice1)).